The sequence spans 24 residues: Outer membrane protein (24 aa).

This sequence belongs to the Gram-negative porin family. As to quaternary structure, homotrimer.

It localises to the cell outer membrane. Functionally, forms pores that allow passive diffusion of small molecules across the outer membrane. The protein is Outer membrane protein of Sodalis glossinidius.